A 185-amino-acid polypeptide reads, in one-letter code: Elongation factor P (185 aa).

This sequence belongs to the elongation factor P family.

Its subcellular location is the cytoplasm. It functions in the pathway protein biosynthesis; polypeptide chain elongation. Involved in peptide bond synthesis. Stimulates efficient translation and peptide-bond synthesis on native or reconstituted 70S ribosomes in vitro. Probably functions indirectly by altering the affinity of the ribosome for aminoacyl-tRNA, thus increasing their reactivity as acceptors for peptidyl transferase. This Paraburkholderia phytofirmans (strain DSM 17436 / LMG 22146 / PsJN) (Burkholderia phytofirmans) protein is Elongation factor P.